We begin with the raw amino-acid sequence, 157 residues long: Protein Smg homolog (157 aa).

Belongs to the Smg family.

This Aliivibrio salmonicida (strain LFI1238) (Vibrio salmonicida (strain LFI1238)) protein is Protein Smg homolog.